We begin with the raw amino-acid sequence, 738 residues long: MDPFFLNTQHVELLVSGKQSSPQDLLGIVSESLNQDRIVLFRPGAETVFVELRGKIQQAESHHSGIFSLPVMKGISPQDYRVYHQNGLLAHDPYAFPLLWGEIDSFLFHEGTHQRIYERMGAIPCEIDGVPGVRFIVWAPHAQRVSVIGDFNGWHGLVNPLHKVSDQGVWELFVPGLTAGACYKWEMVTESGQVLIKSDPYGKFFGPPPRSVSVVIDDSYEWNDSEWLEERIKKTEGPMNIYEVHVGSWQWQEGQPLNYKELADQLALYCKQMHYTHVELLPVTEHPLNESWGYQTTGYYAPTSRYGSFEDLQYFIDTMHQHGIGVILDWVPGHFPIDSFAMSGFDGTPLYEYTRNPSPLHPHWHTYTFDYAKPEVCNFLLGSALFWIDKMHVDGIRVDAVSSMLYLDYGRYAGEWVPNRYGGRENLDAIRFLQQFNTVIHEKYPGVLTFAEESTTFPKITVSVEEGGLGFDYKWNMGWMHDTLHYFEKDFPYRPYHQSDLTFPQWYAFSERFLLPFSHDEVVHGKRSLIGKMPGDAWRQFAQLRLLLGYQICQPGKKLLFMGGEFGQGREWSPGRELDWELLDISYHQGVHLCSQELNALYVQSPQLWQADHLPSSFRWVDFSDVRNGVVAYLRFADADAKKALLCVHHFGVGYFPHYLLPILPLESCDLLMNTDNTRFGGSGKGFREPEILTPEIARQEREAAGLIEADDESGPDCWGLDIELPPSATLIFSVTLQ.

The active-site Nucleophile is Asp399. Catalysis depends on Glu452, which acts as the Proton donor.

This sequence belongs to the glycosyl hydrolase 13 family. GlgB subfamily. In terms of assembly, monomer.

The enzyme catalyses Transfers a segment of a (1-&gt;4)-alpha-D-glucan chain to a primary hydroxy group in a similar glucan chain.. Its pathway is glycan biosynthesis; glycogen biosynthesis. Functionally, catalyzes the formation of the alpha-1,6-glucosidic linkages in glycogen by scission of a 1,4-alpha-linked oligosaccharide from growing alpha-1,4-glucan chains and the subsequent attachment of the oligosaccharide to the alpha-1,6 position. The polypeptide is 1,4-alpha-glucan branching enzyme GlgB (Chlamydia trachomatis serovar L2 (strain ATCC VR-902B / DSM 19102 / 434/Bu)).